Here is a 308-residue protein sequence, read N- to C-terminus: MEKTVNPFRIGIAPISWVNDDIPGLGDHYTQDQVLSEMAELGYVATEMGRLFSQDPPSLRAKLNQYGIELASKFIGVLFSDRSRLEEELKTFRSWAEYLHDMGCKYAIVCEMGGSMHWDPRRAPEEKTIQRLTDSEWESLVDGLHRAAHICQELGMKLVYHFHAGTVVETAEEIDRLMELTDPNLVHLLYDTGHALYGGYDPVELLHRYADRIQYVHLKDVRHDVLELVRREQLDFRTAVLRGMFTVPGDGCIDFVPIFAKLIEMDYNGWIIVEAEQDPAVAHPYTYAKMAKEYIDRLVHHLLAAQKR.

Belongs to the IolE/MocC family. Glutathione is required as a cofactor. The cofactor is Co(2+). Mn(2+) serves as cofactor.

It carries out the reaction scyllo-inosose = 3D-3,5/4-trihydroxycyclohexane-1,2-dione + H2O. Its pathway is polyol metabolism; myo-inositol degradation into acetyl-CoA; acetyl-CoA from myo-inositol: step 2/7. Catalyzes the dehydration of inosose (2-keto-myo-inositol, 2KMI or 2,4,6/3,5-pentahydroxycyclohexanone) to 3D-(3,5/4)-trihydroxycyclohexane-1,2-dione (D-2,3-diketo-4-deoxy-epi-inositol). This is Inosose dehydratase from Geobacillus kaustophilus (strain HTA426).